Consider the following 455-residue polypeptide: Phosphoglucosamine/phosphogalactosamine mutase (455 aa).

Serine 97 serves as the catalytic Phosphoserine intermediate. Positions 97, 241, 243, and 245 each coordinate Mg(2+). Position 97 is a phosphoserine (serine 97).

The protein belongs to the phosphohexose mutase family. Mg(2+) serves as cofactor. In terms of processing, activated by phosphorylation.

It catalyses the reaction alpha-D-glucosamine 1-phosphate = D-glucosamine 6-phosphate. The enzyme catalyses D-galactosamine 6-phosphate = alpha-D-galactosamine 1-phosphate. Involved in the synthesis of UDP-N-acetylglucosamine (UDP-GlcNAc) and UDP-N-acetylgalactosamine (UDP-GalNAc). Catalyzes the conversion of glucosamine-6-phosphate to glucosamine-1-phosphate and of galactosamine-6-phosphate to galactosamine-1-phosphate. The sequence is that of Phosphoglucosamine/phosphogalactosamine mutase from Sulfurisphaera tokodaii (strain DSM 16993 / JCM 10545 / NBRC 100140 / 7) (Sulfolobus tokodaii).